An 81-amino-acid chain; its full sequence is Large ribosomal subunit protein bL31 (81 aa).

The protein belongs to the bacterial ribosomal protein bL31 family. Type A subfamily. As to quaternary structure, part of the 50S ribosomal subunit.

In terms of biological role, binds the 23S rRNA. The protein is Large ribosomal subunit protein bL31 of Synechocystis sp. (strain ATCC 27184 / PCC 6803 / Kazusa).